Reading from the N-terminus, the 420-residue chain is Innexin-3 (420 aa).

A run of 4 helical transmembrane segments spans residues 33 to 53, 104 to 124, 193 to 213, and 278 to 298; these read ATLLAFFSIMVSCKQYVGSAI, WVPIVLAIQAFMFYLPSWIWS, MLYICIKLMYLANVFVQFIIL, and IYLFIWFWFVFVLITTFINTL. Residues 378–405 form a disordered region; it reads NRDFHHGHSTKSTSPGLEEGHHEHLYTP. Positions 395-405 are enriched in basic and acidic residues; the sequence is EEGHHEHLYTP.

Belongs to the pannexin family. As to quaternary structure, interacts with F-actin. In terms of tissue distribution, evenly distributed along the adjoining membranes of the two pm5 pharyngeal muscle cells.

Its subcellular location is the cell membrane. The protein localises to the cell junction. It localises to the gap junction. In terms of biological role, structural component of gap junctions. Plays a role in maintaining gap junction activity to promote phayngeal muscle contraction. This Caenorhabditis elegans protein is Innexin-3.